The chain runs to 402 residues: GDSL esterase/lipase At1g20120 (402 aa).

The signal sequence occupies residues 1–35 (MLQDRVSGSLSSSKISRCVLFLSLFCFFLLTMHAS). The disordered stretch occupies residues 41-69 (RVPNPGPSPAPEPKPCPSPGPNPAPATTK). Residues 44 to 64 (NPGPSPAPEPKPCPSPGPNPA) are compositionally biased toward pro residues. N-linked (GlcNAc...) asparagine glycosylation occurs at asparagine 73. The Nucleophile role is filled by serine 85. 2 N-linked (GlcNAc...) asparagine glycosylation sites follow: asparagine 314 and asparagine 367. Residues aspartate 375 and histidine 378 contribute to the active site.

It belongs to the 'GDSL' lipolytic enzyme family.

The protein resides in the secreted. This chain is GDSL esterase/lipase At1g20120, found in Arabidopsis thaliana (Mouse-ear cress).